Reading from the N-terminus, the 883-residue chain is NF-X1-type zinc finger protein NFXL2 (883 aa).

A compositionally biased stretch (polar residues) spans 1–10 (MTNMAGTATT). The interval 1-44 (MTNMAGTATTEFRWKSPPQPPSQEQPISDSDSDSGSDSENHQHR) is disordered. An RING-type; degenerate zinc finger spans residues 87 to 152 (CLICLERIKR…EAVWNCPKCR (66 aa)). 11 consecutive NF-X1-type zinc fingers follow at residues 198–216 (CGHC…SCPK), 250–269 (CNIH…PCRE), 303–322 (CGKH…LCPY), 357–377 (CGYH…TCRI), 410–429 (CARH…PCSE), 437–456 (CRNH…PCPI), 494–515 (CRHG…PCRL), 523–568 (CGHK…RCPE), 605–636 (CGNH…KCDL), 646–664 (CQHP…PCKT), and 709–738 (CTHL…RCKC). The tract at residues 798–824 (EIEEKEEPSGKNASKRRKRRGRGQDIQ) is disordered. Residues 841–863 (MVVMLVAMLAAVSYYGYKGLLWL) form a helical membrane-spanning segment.

Belongs to the NFX1 family. Interacts with ADO1/ZTL. As to expression, constitutively expressed in mesophyll and guard cells.

The protein resides in the nucleus. It localises to the membrane. It functions in the pathway protein modification; protein ubiquitination. In terms of biological role, probable transcriptional regulator. May mediate E2- or E3-dependent ubiquitination. Required to gate light sensitivity during the night. Regulates the speed of the clock by acting in the feedback loop between CCA1, LHY and APRR1/TOC1. Promotes the expression of CCA1 at night but not by days. This activational effect is enhanced by interaction with ADO1/ZTL. Association with ADO1/ZTL is not leading to the degradation of NFXL2. Confers sensitivity to osmotic stress such as high salinity. Prevents H(2)O(2) production and abscisic acid accumulation. Part of a regulatory network that integrates the biosynthesis and action of abscisic acid, reactive oxygen species and cuticle components. The protein is NF-X1-type zinc finger protein NFXL2 (NFXL2) of Arabidopsis thaliana (Mouse-ear cress).